The primary structure comprises 498 residues: Protein spinster homolog 3 (498 aa).

Helical transmembrane passes span 49–71 (IAVAVLCYINLLNYMDRYTIAGV), 87–107 (GLLQTVFICSFMFLAPVFGYL), 114–134 (KLIMIVGLVMWIVTTLGSSFV), 148–168 (LVGTGEASYSTIAPTIIGDLF), 175–195 (LMISFFYIFIPVGSGLGYIIG), 207–227 (WALRVSPALGGLGLLLLVFLI), 260–280 (FVWSSLGVTAMAFVTGALAFW), 309–329 (YIFGAITVVTGVVGVFLGTCI), 343–363 (LICAVGMLSSSPCFFIAIVLA), 373–393 (FIAIGETLLSLNWAILADILL), 407–427 (LQIMVCHLLGDAGSPYLIGAI), and 451–471 (LLCPFIGVLGGLFFLMTSLYI).

The protein belongs to the major facilitator superfamily. Spinster (TC 2.A.1.49) family.

The protein resides in the membrane. Sphingolipid transporter. The protein is Protein spinster homolog 3 (spns3) of Danio rerio (Zebrafish).